Consider the following 275-residue polypeptide: Undecaprenyl-diphosphatase (275 aa).

The next 8 membrane-spanning stretches (helical) occupy residues 2-22 (LDIF…FLPI), 43-63 (FTDM…VVLY), 83-103 (WVLW…GLPL), 111-131 (LMNW…FIVI), 147-167 (TLPY…LIPG), 186-206 (YVAT…ASLL), 221-241 (LQGA…YLSI), and 255-275 (AFGW…TLIH).

Belongs to the UppP family.

The protein localises to the cell membrane. It catalyses the reaction di-trans,octa-cis-undecaprenyl diphosphate + H2O = di-trans,octa-cis-undecaprenyl phosphate + phosphate + H(+). Catalyzes the dephosphorylation of undecaprenyl diphosphate (UPP). Confers resistance to bacitracin. The sequence is that of Undecaprenyl-diphosphatase from Lactiplantibacillus plantarum (strain ATCC BAA-793 / NCIMB 8826 / WCFS1) (Lactobacillus plantarum).